The chain runs to 521 residues: 7-deoxyloganic acid hydroxylase (521 aa).

A helical transmembrane segment spans residues 8-28 (IIFLVFVSLTLYWVYRILDWV). 2 N-linked (GlcNAc...) asparagine glycosylation sites follow: N107 and N311. C469 lines the heme pocket.

It belongs to the cytochrome P450 family. As to expression, mostly present in actively growing aerial organs, including leaves, flower buds and stems, and, to a lower extent, in mature leaves, roots and opened flowers. Expressed in the leaf internal phloem-associated parenchyma (IPAP) inside the mesophyll.

It is found in the endoplasmic reticulum membrane. The enzyme catalyses 7-deoxyloganate + reduced [NADPH--hemoprotein reductase] + O2 = loganate + oxidized [NADPH--hemoprotein reductase] + H2O + H(+). The protein operates within alkaloid biosynthesis. In terms of biological role, component of the seco-iridoid and derivatives monoterpenoid indole alkaloids (MIAs, e.g. vincristine, quinine, and strychnine) biosynthesis pathway. Catalyzes the conversion of 7-deoxyloganic acid into loganic acid. Not active on 7-deoxyloganetic acid. The chain is 7-deoxyloganic acid hydroxylase from Catharanthus roseus (Madagascar periwinkle).